We begin with the raw amino-acid sequence, 467 residues long: Asparagine--tRNA ligase (467 aa).

It belongs to the class-II aminoacyl-tRNA synthetase family. In terms of assembly, homodimer.

Its subcellular location is the cytoplasm. The catalysed reaction is tRNA(Asn) + L-asparagine + ATP = L-asparaginyl-tRNA(Asn) + AMP + diphosphate + H(+). The chain is Asparagine--tRNA ligase from Legionella pneumophila (strain Corby).